The primary structure comprises 68 residues: Large ribosomal subunit protein uL30 (68 aa).

Belongs to the universal ribosomal protein uL30 family. In terms of assembly, part of the 50S ribosomal subunit.

The chain is Large ribosomal subunit protein uL30 from Bartonella quintana (strain Toulouse) (Rochalimaea quintana).